Here is a 354-residue protein sequence, read N- to C-terminus: Bergaptol O-methyltransferase (354 aa).

H121 contributes to the bergaptol binding site. The S-adenosyl-L-homocysteine site is built by S174, G198, D221, and K255. Residue H259 coordinates bergaptol. The active-site Proton acceptor is H259.

The protein belongs to the class I-like SAM-binding methyltransferase superfamily. Cation-independent O-methyltransferase family. COMT subfamily.

It carries out the reaction a 5-hydroxyfurocoumarin + S-adenosyl-L-methionine = a 5-methoxyfurocoumarin + S-adenosyl-L-homocysteine + H(+). The enzyme catalyses bergaptol + S-adenosyl-L-methionine = bergapten + S-adenosyl-L-homocysteine. Its activity is regulated as follows. Inhibited by Cu(2+), Ni(2+) and Co(2+). In Ammi majus (Bishop's weed), this protein is Bergaptol O-methyltransferase.